Reading from the N-terminus, the 555-residue chain is Formate--tetrahydrofolate ligase (555 aa).

Residue 65-72 coordinates ATP; the sequence is TPAGEGKS.

It belongs to the formate--tetrahydrofolate ligase family.

The catalysed reaction is (6S)-5,6,7,8-tetrahydrofolate + formate + ATP = (6R)-10-formyltetrahydrofolate + ADP + phosphate. Its pathway is one-carbon metabolism; tetrahydrofolate interconversion. The polypeptide is Formate--tetrahydrofolate ligase (Staphylococcus epidermidis (strain ATCC 35984 / DSM 28319 / BCRC 17069 / CCUG 31568 / BM 3577 / RP62A)).